Reading from the N-terminus, the 115-residue chain is Large ribosomal subunit protein bL20 (115 aa).

The protein belongs to the bacterial ribosomal protein bL20 family.

In terms of biological role, binds directly to 23S ribosomal RNA and is necessary for the in vitro assembly process of the 50S ribosomal subunit. It is not involved in the protein synthesizing functions of that subunit. In Synechococcus sp. (strain CC9902), this protein is Large ribosomal subunit protein bL20.